Consider the following 345-residue polypeptide: Large ribosomal subunit protein uL10 (345 aa).

The segment at 303-345 is disordered; the sequence is SLPQTAAPQQTPQPTEAPKEEAQEEKKEGPSEEEIAGSLASLF. The segment covering 305–318 has biased composition (low complexity); that stretch reads PQTAAPQQTPQPTE. Residues 319–332 are compositionally biased toward basic and acidic residues; the sequence is APKEEAQEEKKEGP.

Belongs to the universal ribosomal protein uL10 family. As to quaternary structure, part of the 50S ribosomal subunit. Forms part of the ribosomal stalk which helps the ribosome interact with GTP-bound translation factors. Forms a heptameric L10(L12)2(L12)2(L12)2 complex, where L10 forms an elongated spine to which the L12 dimers bind in a sequential fashion.

Functionally, forms part of the ribosomal stalk, playing a central role in the interaction of the ribosome with GTP-bound translation factors. In Pyrobaculum aerophilum (strain ATCC 51768 / DSM 7523 / JCM 9630 / CIP 104966 / NBRC 100827 / IM2), this protein is Large ribosomal subunit protein uL10.